Here is a 358-residue protein sequence, read N- to C-terminus: Histidinol-phosphate aminotransferase (358 aa).

Lysine 221 is subject to N6-(pyridoxal phosphate)lysine.

The protein belongs to the class-II pyridoxal-phosphate-dependent aminotransferase family. Histidinol-phosphate aminotransferase subfamily. Homodimer. Requires pyridoxal 5'-phosphate as cofactor.

It catalyses the reaction L-histidinol phosphate + 2-oxoglutarate = 3-(imidazol-4-yl)-2-oxopropyl phosphate + L-glutamate. The protein operates within amino-acid biosynthesis; L-histidine biosynthesis; L-histidine from 5-phospho-alpha-D-ribose 1-diphosphate: step 7/9. This chain is Histidinol-phosphate aminotransferase, found in Caldicellulosiruptor saccharolyticus (strain ATCC 43494 / DSM 8903 / Tp8T 6331).